A 102-amino-acid chain; its full sequence is Small ribosomal subunit protein uS14m (102 aa).

This sequence belongs to the universal ribosomal protein uS14 family.

The protein resides in the mitochondrion. The sequence is that of Small ribosomal subunit protein uS14m (RPS14) from Paramecium tetraurelia.